A 252-amino-acid polypeptide reads, in one-letter code: Imidazole glycerol phosphate synthase subunit HisF (252 aa).

Catalysis depends on residues aspartate 11 and aspartate 130.

Belongs to the HisA/HisF family. Heterodimer of HisH and HisF.

Its subcellular location is the cytoplasm. The enzyme catalyses 5-[(5-phospho-1-deoxy-D-ribulos-1-ylimino)methylamino]-1-(5-phospho-beta-D-ribosyl)imidazole-4-carboxamide + L-glutamine = D-erythro-1-(imidazol-4-yl)glycerol 3-phosphate + 5-amino-1-(5-phospho-beta-D-ribosyl)imidazole-4-carboxamide + L-glutamate + H(+). The protein operates within amino-acid biosynthesis; L-histidine biosynthesis; L-histidine from 5-phospho-alpha-D-ribose 1-diphosphate: step 5/9. IGPS catalyzes the conversion of PRFAR and glutamine to IGP, AICAR and glutamate. The HisF subunit catalyzes the cyclization activity that produces IGP and AICAR from PRFAR using the ammonia provided by the HisH subunit. The sequence is that of Imidazole glycerol phosphate synthase subunit HisF from Staphylococcus aureus (strain USA300).